A 576-amino-acid chain; its full sequence is Proline--tRNA ligase (576 aa).

It belongs to the class-II aminoacyl-tRNA synthetase family. ProS type 1 subfamily. Homodimer.

It is found in the cytoplasm. The catalysed reaction is tRNA(Pro) + L-proline + ATP = L-prolyl-tRNA(Pro) + AMP + diphosphate. Functionally, catalyzes the attachment of proline to tRNA(Pro) in a two-step reaction: proline is first activated by ATP to form Pro-AMP and then transferred to the acceptor end of tRNA(Pro). As ProRS can inadvertently accommodate and process non-cognate amino acids such as alanine and cysteine, to avoid such errors it has two additional distinct editing activities against alanine. One activity is designated as 'pretransfer' editing and involves the tRNA(Pro)-independent hydrolysis of activated Ala-AMP. The other activity is designated 'posttransfer' editing and involves deacylation of mischarged Ala-tRNA(Pro). The misacylated Cys-tRNA(Pro) is not edited by ProRS. This is Proline--tRNA ligase from Thiobacillus denitrificans (strain ATCC 25259 / T1).